A 286-amino-acid chain; its full sequence is 33 kDa chaperonin (286 aa).

Disulfide bonds link Cys-225–Cys-227 and Cys-258–Cys-261.

This sequence belongs to the HSP33 family. In terms of processing, under oxidizing conditions two disulfide bonds are formed involving the reactive cysteines. Under reducing conditions zinc is bound to the reactive cysteines and the protein is inactive.

It is found in the cytoplasm. Redox regulated molecular chaperone. Protects both thermally unfolding and oxidatively damaged proteins from irreversible aggregation. Plays an important role in the bacterial defense system toward oxidative stress. The protein is 33 kDa chaperonin of Shewanella sediminis (strain HAW-EB3).